The primary structure comprises 49 residues: Light-harvesting protein B-875 beta chain (49 aa).

Residues 2–27 (ADKSDLGYTGLTDEQAQELHSVYMSG) lie on the Cytoplasmic side of the membrane. The a bacteriochlorophyll site is built by His-21 and His-39. A helical; Signal-anchor for type II membrane protein transmembrane segment spans residues 28–45 (LWPFSAVAIVAHLAVYIW). The Periplasmic segment spans residues 46–49 (RPWF).

Belongs to the antenna complex beta subunit family. As to quaternary structure, the core complex is formed by different alpha and beta chains, binding bacteriochlorophyll molecules, and arranged most probably in tetrameric structures disposed around the reaction center. The non-pigmented gamma chains may constitute additional components.

Its subcellular location is the cell inner membrane. Functionally, antenna complexes are light-harvesting systems, which transfer the excitation energy to the reaction centers. The protein is Light-harvesting protein B-875 beta chain (pufB) of Cereibacter sphaeroides (Rhodobacter sphaeroides).